The sequence spans 156 residues: Small ribosomal subunit protein uS7 (156 aa).

It belongs to the universal ribosomal protein uS7 family. In terms of assembly, part of the 30S ribosomal subunit. Contacts proteins S9 and S11.

Its function is as follows. One of the primary rRNA binding proteins, it binds directly to 16S rRNA where it nucleates assembly of the head domain of the 30S subunit. Is located at the subunit interface close to the decoding center, probably blocks exit of the E-site tRNA. The sequence is that of Small ribosomal subunit protein uS7 from Limosilactobacillus reuteri (strain DSM 20016) (Lactobacillus reuteri).